Reading from the N-terminus, the 616-residue chain is Chaperone protein HscA (616 aa).

This sequence belongs to the heat shock protein 70 family.

Chaperone involved in the maturation of iron-sulfur cluster-containing proteins. Has a low intrinsic ATPase activity which is markedly stimulated by HscB. Involved in the maturation of IscU. The polypeptide is Chaperone protein HscA (Salmonella newport (strain SL254)).